The following is a 401-amino-acid chain: 8-amino-7-oxononanoate synthase (401 aa).

A substrate-binding site is contributed by arginine 24. Pyridoxal 5'-phosphate is bound at residue glycine 111 to phenylalanine 112. Substrate is bound at residue histidine 137. 3 residues coordinate pyridoxal 5'-phosphate: serine 183, histidine 211, and threonine 240. Residue lysine 243 is modified to N6-(pyridoxal phosphate)lysine. Threonine 357 provides a ligand contact to substrate.

This sequence belongs to the class-II pyridoxal-phosphate-dependent aminotransferase family. BioF subfamily. As to quaternary structure, homodimer. Pyridoxal 5'-phosphate serves as cofactor.

The enzyme catalyses 6-carboxyhexanoyl-[ACP] + L-alanine + H(+) = (8S)-8-amino-7-oxononanoate + holo-[ACP] + CO2. Its pathway is cofactor biosynthesis; biotin biosynthesis. Functionally, catalyzes the decarboxylative condensation of pimeloyl-[acyl-carrier protein] and L-alanine to produce 8-amino-7-oxononanoate (AON), [acyl-carrier protein], and carbon dioxide. This Xanthomonas campestris pv. campestris (strain 8004) protein is 8-amino-7-oxononanoate synthase.